The sequence spans 153 residues: Hsp90 co-chaperone HCH1 (153 aa).

It belongs to the AHA1 family. In terms of assembly, monomer. Interacts with HSP82.

The protein localises to the cytoplasm. The protein resides in the nucleus. Its function is as follows. Co-chaperone that binds to the molecular chaperone HSP82 and stimulates its ATPase activity. Although not essential, it confers thermotolerance when intracellular levels of HSP82 are limiting. This Saccharomyces cerevisiae (strain ATCC 204508 / S288c) (Baker's yeast) protein is Hsp90 co-chaperone HCH1 (HCH1).